Reading from the N-terminus, the 244-residue chain is Ubiquinone/menaquinone biosynthesis C-methyltransferase UbiE (244 aa).

S-adenosyl-L-methionine contacts are provided by residues Thr-70, Asp-91, and Asp-117–Ala-118.

This sequence belongs to the class I-like SAM-binding methyltransferase superfamily. MenG/UbiE family.

It carries out the reaction a 2-demethylmenaquinol + S-adenosyl-L-methionine = a menaquinol + S-adenosyl-L-homocysteine + H(+). The enzyme catalyses a 2-methoxy-6-(all-trans-polyprenyl)benzene-1,4-diol + S-adenosyl-L-methionine = a 5-methoxy-2-methyl-3-(all-trans-polyprenyl)benzene-1,4-diol + S-adenosyl-L-homocysteine + H(+). The protein operates within quinol/quinone metabolism; menaquinone biosynthesis; menaquinol from 1,4-dihydroxy-2-naphthoate: step 2/2. It functions in the pathway cofactor biosynthesis; ubiquinone biosynthesis. Its function is as follows. Methyltransferase required for the conversion of demethylmenaquinol (DMKH2) to menaquinol (MKH2) and the conversion of 2-polyprenyl-6-methoxy-1,4-benzoquinol (DDMQH2) to 2-polyprenyl-3-methyl-6-methoxy-1,4-benzoquinol (DMQH2). This chain is Ubiquinone/menaquinone biosynthesis C-methyltransferase UbiE, found in Laribacter hongkongensis (strain HLHK9).